Here is a 485-residue protein sequence, read N- to C-terminus: Glutamate mutase epsilon subunit (485 aa).

R100 is a binding site for L-glutamate. Residue N123 participates in adenosylcob(III)alamin binding. L-glutamate-binding positions include 149–150 (KH) and D171. Adenosylcob(III)alamin-binding residues include P180, F297, K326, and E330.

Belongs to the methylaspartate mutase GlmE subunit family. In terms of assembly, heterotetramer composed of 2 epsilon subunits (GlmE) and 2 sigma subunits (GlmS). GlmE exists as a homodimer and GlmS as a monomer. Requires adenosylcob(III)alamin as cofactor.

The enzyme catalyses (2S,3S)-3-methyl-L-aspartate = L-glutamate. It functions in the pathway amino-acid degradation; L-glutamate degradation via mesaconate pathway; acetate and pyruvate from L-glutamate: step 1/4. Catalyzes the carbon skeleton rearrangement of L-glutamate to L-threo-3-methylaspartate ((2S,3S)-3-methylaspartate). The sequence is that of Glutamate mutase epsilon subunit from Fusobacterium nucleatum subsp. nucleatum (strain ATCC 25586 / DSM 15643 / BCRC 10681 / CIP 101130 / JCM 8532 / KCTC 2640 / LMG 13131 / VPI 4355).